The primary structure comprises 247 residues: 1-(5-phosphoribosyl)-5-[(5-phosphoribosylamino)methylideneamino] imidazole-4-carboxamide isomerase (247 aa).

Residue aspartate 8 is the Proton acceptor of the active site. The Proton donor role is filled by aspartate 131.

Belongs to the HisA/HisF family.

The protein localises to the cytoplasm. It catalyses the reaction 1-(5-phospho-beta-D-ribosyl)-5-[(5-phospho-beta-D-ribosylamino)methylideneamino]imidazole-4-carboxamide = 5-[(5-phospho-1-deoxy-D-ribulos-1-ylimino)methylamino]-1-(5-phospho-beta-D-ribosyl)imidazole-4-carboxamide. The protein operates within amino-acid biosynthesis; L-histidine biosynthesis; L-histidine from 5-phospho-alpha-D-ribose 1-diphosphate: step 4/9. In Methylobacillus flagellatus (strain ATCC 51484 / DSM 6875 / VKM B-1610 / KT), this protein is 1-(5-phosphoribosyl)-5-[(5-phosphoribosylamino)methylideneamino] imidazole-4-carboxamide isomerase.